Consider the following 105-residue polypeptide: Cysteine-rich venom protein VAR2 (105 aa).

The signal sequence occupies residues 1 to 22 (MILLKLYLTLAAILCQSRGTTS).

It belongs to the CRISP family. Contains 8 disulfide bonds. Expressed by the venom gland.

It is found in the secreted. In terms of biological role, blocks ryanodine receptors, and potassium channels. This is Cysteine-rich venom protein VAR2 from Varanus acanthurus (Ridge-tailed monitor).